The following is a 592-amino-acid chain: V-type ATP synthase alpha chain (592 aa).

232 to 239 (GPFGAGKT) lines the ATP pocket.

This sequence belongs to the ATPase alpha/beta chains family.

It carries out the reaction ATP + H2O + 4 H(+)(in) = ADP + phosphate + 5 H(+)(out). Its function is as follows. Produces ATP from ADP in the presence of a proton gradient across the membrane. The V-type alpha chain is a catalytic subunit. The chain is V-type ATP synthase alpha chain from Clostridium botulinum (strain Eklund 17B / Type B).